The following is a 1529-amino-acid chain: ATP-dependent permease PDR15 (1529 aa).

Over residues 1–13 (MSSDIRDVEERNS) the composition is skewed to basic and acidic residues. The tract at residues 1–38 (MSSDIRDVEERNSRSSSSSSSSNSAAQSIGQHPYRGFD) is disordered. At 1–531 (MSSDIRDVEE…NFWRMKQSAS (531 aa)) the chain is on the cytoplasmic side. The span at 14-24 (RSSSSSSSSNS) shows a compositional bias: low complexity. Positions 171 to 420 (LRLLKPSKEE…FQDMGYYCPP (250 aa)) constitute an ABC transporter 1 domain. A helical transmembrane segment spans residues 532 to 552 (VTLWQVIGNSVMAFILGSMFY). The Extracellular segment spans residues 553-567 (KVMKKNDTSTFYFRG). N-linked (GlcNAc...) asparagine glycosylation is present at Asn558. The chain crosses the membrane as a helical span at residues 568 to 588 (AAMFFAILFNAFSCLLEIFSL). Topologically, residues 589–617 (YETRPITEKHRTYSLYHPSADAFASVLSE) are cytoplasmic. The helical transmembrane segment at 618–638 (MPPKLITAVCFNIIFYFLVDF) threads the bilayer. At 639-642 (RRNG) the chain is on the extracellular side. A helical transmembrane segment spans residues 643–663 (GVFFFYFLINVIATFTLSHLF). Residues 664 to 699 (RCVGSLTKTLQEAMVPASMLLLAISMYTGFAIPKTK) are Cytoplasmic-facing. The chain crosses the membrane as a helical span at residues 700–720 (ILGWSIWIWYINPLAYLFESL). Over 721–783 (MINEFHDRRF…YDYEHKHKWR (63 aa)) the chain is Extracellular. Residue Asn744 is glycosylated (N-linked (GlcNAc...) asparagine). The helical transmembrane segment at 784 to 804 (GFGIGMAYVVFFFFVYLILCE) threads the bilayer. At 805–1219 (YNEGAKQKGE…LFQQYWRSPD (415 aa)) the chain is on the cytoplasmic side. Residues 829–840 (EGKLQEKHRPGD) show a composition bias toward basic and acidic residues. Positions 829–873 (EGKLQEKHRPGDIENNAGSSPDSATTEKKILDDSSEGSDSSSDNA) are disordered. Residues 884–1127 (FHWRDLCYDV…MIDYFESKGA (244 aa)) form the ABC transporter 2 domain. 920 to 927 (GASGAGKT) contacts ATP. A helical membrane pass occupies residues 1220 to 1240 (YLWSKFILTIFNQVFIGFTFF). Residues 1241 to 1312 (KADRSLQGLQ…VEIPWNILAG (72 aa)) are Extracellular-facing. The helical transmembrane segment at 1313–1333 (TIAYCIYYYAVGFYANASAAG) threads the bilayer. The Cytoplasmic portion of the chain corresponds to 1334 to 1340 (QLHERGA). The chain crosses the membrane as a helical span at residues 1341–1361 (LFWLFSIAFYVYIGSMGLLMI). Residues 1362–1368 (SFNEVAE) are Extracellular-facing. A helical transmembrane segment spans residues 1369 to 1389 (TAAHMGTLLFTMALSFCGVMA). Over 1390-1396 (TPKVMPR) the chain is Cytoplasmic. Residues 1397–1417 (FWIFMYRVSPLTYMIDALLAL) form a helical membrane-spanning segment. Topologically, residues 1418 to 1492 (GVANVDVKCS…SSHYYRRWRN (75 aa)) are extracellular. Residues 1493-1513 (YGIFICYIAFDYIAATFLYWL) form a helical membrane-spanning segment. Topologically, residues 1514–1529 (SRVPKKNGKISEKPKK) are cytoplasmic.

This sequence belongs to the ABC transporter superfamily. ABCG family. PDR (TC 3.A.1.205) subfamily.

It localises to the membrane. The sequence is that of ATP-dependent permease PDR15 (PDR15) from Saccharomyces cerevisiae (strain ATCC 204508 / S288c) (Baker's yeast).